A 106-amino-acid chain; its full sequence is Small ribosomal subunit protein bS20 (106 aa).

Basic residues predominate over residues 1 to 32; that stretch reads MAQKKPKRNLSALKRHRQSLKRRLRNKAKKSA. The tract at residues 1–33 is disordered; the sequence is MAQKKPKRNLSALKRHRQSLKRRLRNKAKKSAI.

The protein belongs to the bacterial ribosomal protein bS20 family.

Binds directly to 16S ribosomal RNA. This Thermus thermophilus (strain ATCC BAA-163 / DSM 7039 / HB27) protein is Small ribosomal subunit protein bS20 (rpsT).